The chain runs to 349 residues: Phenylalanine--tRNA ligase alpha subunit (349 aa).

E258 contributes to the Mg(2+) binding site.

Belongs to the class-II aminoacyl-tRNA synthetase family. Phe-tRNA synthetase alpha subunit type 1 subfamily. In terms of assembly, tetramer of two alpha and two beta subunits. The cofactor is Mg(2+).

The protein localises to the cytoplasm. The enzyme catalyses tRNA(Phe) + L-phenylalanine + ATP = L-phenylalanyl-tRNA(Phe) + AMP + diphosphate + H(+). The protein is Phenylalanine--tRNA ligase alpha subunit of Rickettsia rickettsii (strain Sheila Smith).